The primary structure comprises 435 residues: Evolutionarily conserved signaling intermediate in Toll pathway, mitochondrial (435 aa).

A mitochondrion-targeting transit peptide spans 1–48 (MSWVQVNLLVRSLSRGWGGLCRPALSGTPFAQVSLQALRGLHCSAATH). Residue lysine 372 forms a Glycyl lysine isopeptide (Lys-Gly) (interchain with G-Cter in ubiquitin) linkage. A disordered region spans residues 401 to 435 (LTTSRLEGQSPPHSPPKGPEEDDETIQAEQQQGQS).

This sequence belongs to the ECSIT family. As to quaternary structure, interacts with MAP3K1, SMAD4 and TRAF6. Interacts with SMAD1 only after BMP4-treatment. Part of the mitochondrial complex I assembly/MCIA complex that comprises at least the core subunits TMEM126B, NDUFAF1, ECSIT and ACAD9 and complement subunits such as COA1 and TMEM186. Interacts with NDUFAF1. Interacts with ACAD9. Interacts with TRIM59. Interacts with TMEM70 and TMEM242. Interacts (when ubiquitinated) with NF-kappa-B subunits RELA and NFKB1. Interacts with RIGI, IFIT1 and MAVS; these interactions promote RLR-mediated type I IFN induction. Interacts with SQSTM1; this interaction inhibits TLR4 signaling via functional regulation of the TRAF6-ECSIT complex. Interacts with cereblon/CRBN; this interaction inhibits the ubiquitination of ECSIT. In terms of processing, ubiquitinated on Lys-372; leading to translocation in the nucleus together with RELA and NFKB1 and expression of NF-kappa-B-dependent genes. As to expression, detected in heart, brain, lung, liver, skeletal muscle, kidney and testis. Detected in embryonic mesoderm and epiblast, and in extraembryonic ectoderm.

It localises to the cytoplasm. The protein localises to the nucleus. The protein resides in the mitochondrion. Adapter protein that plays a role in different signaling pathways including TLRs and IL-1 pathways or innate antiviral induction signaling. Plays a role in the activation of NF-kappa-B by forming a signal complex with TRAF6 and TAK1/MAP3K7 to activate TAK1/MAP3K7 leading to activation of IKKs. Once ubiquitinated, interacts with the dissociated RELA and NFKB1 proteins and translocates to the nucleus where it induces NF-kappa-B-dependent gene expression. Plays a role in innate antiviral immune response by bridging the pattern recognition receptors RIGI and MDA5/IFIT1 to the MAVS complex at the mitochondrion. Promotes proteolytic activation of MAP3K1. Involved in the BMP signaling pathway. Required for normal embryonic development. Its function is as follows. As part of the MCIA complex, involved in the assembly of the mitochondrial complex I. This is Evolutionarily conserved signaling intermediate in Toll pathway, mitochondrial from Mus musculus (Mouse).